The chain runs to 262 residues: Ninja-family protein 2 (262 aa).

A disordered region spans residues 49 to 70 (RNSLACNTSKEAAGQSPKEMNA).

Belongs to the Ninja family.

It localises to the nucleus. This chain is Ninja-family protein 2, found in Zea mays (Maize).